Here is a 319-residue protein sequence, read N- to C-terminus: Acetyl-coenzyme A carboxylase carboxyl transferase subunit alpha (319 aa).

The CoA carboxyltransferase C-terminal domain maps to 35–292 (EISKLMRRLV…KKTIAEALAE (258 aa)).

Belongs to the AccA family. As to quaternary structure, acetyl-CoA carboxylase is a heterohexamer composed of biotin carboxyl carrier protein (AccB), biotin carboxylase (AccC) and two subunits each of ACCase subunit alpha (AccA) and ACCase subunit beta (AccD).

It is found in the cytoplasm. The enzyme catalyses N(6)-carboxybiotinyl-L-lysyl-[protein] + acetyl-CoA = N(6)-biotinyl-L-lysyl-[protein] + malonyl-CoA. It participates in lipid metabolism; malonyl-CoA biosynthesis; malonyl-CoA from acetyl-CoA: step 1/1. Component of the acetyl coenzyme A carboxylase (ACC) complex. First, biotin carboxylase catalyzes the carboxylation of biotin on its carrier protein (BCCP) and then the CO(2) group is transferred by the carboxyltransferase to acetyl-CoA to form malonyl-CoA. This Desulfitobacterium hafniense (strain DSM 10664 / DCB-2) protein is Acetyl-coenzyme A carboxylase carboxyl transferase subunit alpha.